An 858-amino-acid chain; its full sequence is MQNPEDHHSDRELSSPSNTTKSNDDKNVEITLDIRDDTMAGQSVKNATKTKAEEAELEALGKNLQKKCSFGATIVRNVSMRMRLPSFKRQPHPPQTFDRSSTAAQNALKGFKFISKTDGGSGWDTVQQRFDELTATSDSLLPRAKFGECIGMNRESEGFALELFNALARRRNITSGCISKEQLKEFWDQIANQSFDSRLRTFFDMVDKDADGRLTEEEVREIICLSASANKLSNIQKQAAEYAALIMEELDRDQKGYIMLENLEMLLLEAPIQPDGEKGLNRNLSHMLSMKLKPTLETNPIKRWYNNLKYFLLDNWRRVWVLLLWIGVMAGLFAYKYVQYKNKAAFNVMGHCVCVAKGAAEVLKLNMALILLPVCRNTITWLRNKTKLGGAVPFDDNINFHKVVAGAIAVGVGIHVLAHMTCDFPRLLNASPEKYKPMEPYFGDQPRNYWHFVKGVEGVSGIIMVVLMSIAFTLASQRFRRNKIRLPRPLNKLTGFNAFWYSHHLFVIVYSLLIVHGIELYLTKEWYKKTTWMYLAIPIILYSGERLLRAFRSSVKDVKILKVAMYTGNVLTLQMSKPQGFNYKSGQYMFVNCAAVSPFEWHPFSITSAPGDEYLSVHIRIVGDWTTKLRDVFSEPSPTGRSGLVADYLQDKINYPKVLIDGPYGAPAQDYKEYEVLLLVGLGIGATPMISIVKDIVNNMKEEKYDHDLEKKTVSGSGRSNFKRVYFYWVTREQGSFDWFKGLMNELAVMDCDGIIEMHNYCTSVYEEGDARSALIAMLQSINHAKNGVDIVSGTRVKTHFARPNWRNVYKRIALNHTDARVGVFYCGAPALTKVLGQLALDFSHKTSTKFDFHKENF.

Residues 1 to 13 (MQNPEDHHSDREL) are compositionally biased toward basic and acidic residues. Positions 1 to 27 (MQNPEDHHSDRELSSPSNTTKSNDDKN) are disordered. Topologically, residues 1–318 (MQNPEDHHSD…KYFLLDNWRR (318 aa)) are cytoplasmic. EF-hand-like stretches follow at residues 134–144 (TATSDSLLPRA) and 171–182 (RNITSGCISKEQ). 2 EF-hand domains span residues 194–229 (SFDS…SASA) and 238–273 (QAAE…APIQ). Ca(2+) is bound by residues Asp-207, Asp-209, Asp-211, Arg-213, and Glu-218. Residues 319-339 (VWVLLLWIGVMAGLFAYKYVQ) traverse the membrane as a helical segment. The Extracellular segment spans residues 340–351 (YKNKAAFNVMGH). The chain crosses the membrane as a helical span at residues 352 to 372 (CVCVAKGAAEVLKLNMALILL). Residues 357–514 (KGAAEVLKLN…LFVIVYSLLI (158 aa)) form the Ferric oxidoreductase domain. At 373–397 (PVCRNTITWLRNKTKLGGAVPFDDN) the chain is on the cytoplasmic side. Residues 398–418 (INFHKVVAGAIAVGVGIHVLA) form a helical membrane-spanning segment. Topologically, residues 419–454 (HMTCDFPRLLNASPEKYKPMEPYFGDQPRNYWHFVK) are extracellular. A helical transmembrane segment spans residues 455–475 (GVEGVSGIIMVVLMSIAFTLA). Topologically, residues 476–497 (SQRFRRNKIRLPRPLNKLTGFN) are cytoplasmic. A helical membrane pass occupies residues 498–518 (AFWYSHHLFVIVYSLLIVHGI). The Extracellular segment spans residues 519–675 (ELYLTKEWYK…APAQDYKEYE (157 aa)). The region spanning 548–670 (LRAFRSSVKD…DGPYGAPAQD (123 aa)) is the FAD-binding FR-type domain. Residues 676 to 696 (VLLLVGLGIGATPMISIVKDI) form a helical membrane-spanning segment. Topologically, residues 697–858 (VNNMKEEKYD…TKFDFHKENF (162 aa)) are cytoplasmic.

It belongs to the RBOH (TC 5.B.1.3) family. As to quaternary structure, monomer and homodimer. In terms of processing, phosphorylated by CPK. As to expression, expressed in leaves.

It is found in the membrane. Its function is as follows. Calcium-dependent NADPH oxidase that generates superoxide. May be responsible for the oxidative burst in response to pathogen attack in the leaves. The sequence is that of Respiratory burst oxidase homolog protein D (RBOHD) from Solanum tuberosum (Potato).